A 420-amino-acid polypeptide reads, in one-letter code: Gamma-glutamyl phosphate reductase (420 aa).

It belongs to the gamma-glutamyl phosphate reductase family.

The protein localises to the cytoplasm. It catalyses the reaction L-glutamate 5-semialdehyde + phosphate + NADP(+) = L-glutamyl 5-phosphate + NADPH + H(+). It participates in amino-acid biosynthesis; L-proline biosynthesis; L-glutamate 5-semialdehyde from L-glutamate: step 2/2. Catalyzes the NADPH-dependent reduction of L-glutamate 5-phosphate into L-glutamate 5-semialdehyde and phosphate. The product spontaneously undergoes cyclization to form 1-pyrroline-5-carboxylate. The sequence is that of Gamma-glutamyl phosphate reductase from Streptococcus pneumoniae (strain CGSP14).